The primary structure comprises 380 residues: Chaperone protein DnaJ (380 aa).

The J domain maps to 5–70; that stretch reads DYYEALGVAR…RKRTAYDQFG (66 aa). The segment at 137-215 adopts a CR-type zinc-finger fold; sequence GTTAKIRIPT…CRGEGRVREH (79 aa). Residues Cys-150, Cys-153, Cys-167, Cys-170, Cys-189, Cys-192, Cys-203, and Cys-206 each contribute to the Zn(2+) site. CXXCXGXG motif repeat units follow at residues 150 to 157, 167 to 174, 189 to 196, and 203 to 210; these read CKACEGSG, CPTCGGHG, CPRCHGSG, and CSTCRGEG. Residues 222–247 are disordered; that stretch reads IPPGVDTGDRIRLTGEGEAGESGGPP.

Belongs to the DnaJ family. In terms of assembly, homodimer. It depends on Zn(2+) as a cofactor.

Its subcellular location is the cytoplasm. Its function is as follows. Participates actively in the response to hyperosmotic and heat shock by preventing the aggregation of stress-denatured proteins and by disaggregating proteins, also in an autonomous, DnaK-independent fashion. Unfolded proteins bind initially to DnaJ; upon interaction with the DnaJ-bound protein, DnaK hydrolyzes its bound ATP, resulting in the formation of a stable complex. GrpE releases ADP from DnaK; ATP binding to DnaK triggers the release of the substrate protein, thus completing the reaction cycle. Several rounds of ATP-dependent interactions between DnaJ, DnaK and GrpE are required for fully efficient folding. Also involved, together with DnaK and GrpE, in the DNA replication of plasmids through activation of initiation proteins. This is Chaperone protein DnaJ from Nitrosococcus oceani (strain ATCC 19707 / BCRC 17464 / JCM 30415 / NCIMB 11848 / C-107).